The following is a 358-amino-acid chain: Methylthioribose-1-phosphate isomerase (358 aa).

Substrate-binding positions include 54-56 (RGA), arginine 96, and glutamine 205. Catalysis depends on aspartate 246, which acts as the Proton donor. 256-257 (NK) is a binding site for substrate.

The protein belongs to the eIF-2B alpha/beta/delta subunits family. MtnA subfamily.

The catalysed reaction is 5-(methylsulfanyl)-alpha-D-ribose 1-phosphate = 5-(methylsulfanyl)-D-ribulose 1-phosphate. It participates in amino-acid biosynthesis; L-methionine biosynthesis via salvage pathway; L-methionine from S-methyl-5-thio-alpha-D-ribose 1-phosphate: step 1/6. Functionally, catalyzes the interconversion of methylthioribose-1-phosphate (MTR-1-P) into methylthioribulose-1-phosphate (MTRu-1-P). The protein is Methylthioribose-1-phosphate isomerase of Pseudomonas syringae pv. tomato (strain ATCC BAA-871 / DC3000).